Consider the following 90-residue polypeptide: Bombyxin G-1 (90 aa).

Residues 1-19 (MKLIIFVVFCITIYGSTSG) form the signal peptide. 3 cysteine pairs are disulfide-bonded: Cys28/Cys77, Cys40/Cys90, and Cys76/Cys81. Positions 49-67 (NTQYEGYHWPLLAYSEERI) are cleaved as a propeptide — c peptide like.

It belongs to the insulin family. In terms of assembly, heterodimer of a B chain and an A chain linked by two disulfide bonds.

The protein resides in the secreted. In Bombyx mori (Silk moth), this protein is Bombyxin G-1 (BBXG1).